A 223-amino-acid polypeptide reads, in one-letter code: Phosphoribosylformylglycinamidine synthase subunit PurQ (223 aa).

The Glutamine amidotransferase type-1 domain occupies 4 to 223; it reads FAVVVFPGTN…FRSMVEWARK (220 aa). Residue Cys85 is the Nucleophile of the active site. Catalysis depends on residues His196 and Glu198.

Part of the FGAM synthase complex composed of 1 PurL, 1 PurQ and 2 PurS subunits.

Its subcellular location is the cytoplasm. It carries out the reaction N(2)-formyl-N(1)-(5-phospho-beta-D-ribosyl)glycinamide + L-glutamine + ATP + H2O = 2-formamido-N(1)-(5-O-phospho-beta-D-ribosyl)acetamidine + L-glutamate + ADP + phosphate + H(+). The catalysed reaction is L-glutamine + H2O = L-glutamate + NH4(+). It functions in the pathway purine metabolism; IMP biosynthesis via de novo pathway; 5-amino-1-(5-phospho-D-ribosyl)imidazole from N(2)-formyl-N(1)-(5-phospho-D-ribosyl)glycinamide: step 1/2. Part of the phosphoribosylformylglycinamidine synthase complex involved in the purines biosynthetic pathway. Catalyzes the ATP-dependent conversion of formylglycinamide ribonucleotide (FGAR) and glutamine to yield formylglycinamidine ribonucleotide (FGAM) and glutamate. The FGAM synthase complex is composed of three subunits. PurQ produces an ammonia molecule by converting glutamine to glutamate. PurL transfers the ammonia molecule to FGAR to form FGAM in an ATP-dependent manner. PurS interacts with PurQ and PurL and is thought to assist in the transfer of the ammonia molecule from PurQ to PurL. This is Phosphoribosylformylglycinamidine synthase subunit PurQ from Thermococcus kodakarensis (strain ATCC BAA-918 / JCM 12380 / KOD1) (Pyrococcus kodakaraensis (strain KOD1)).